Reading from the N-terminus, the 360-residue chain is Phospho-N-acetylmuramoyl-pentapeptide-transferase (360 aa).

The next 10 helical transmembrane spans lie at 26–46, 74–94, 97–117, 134–154, 168–188, 199–219, 236–256, 263–283, 288–308, and 338–358; these read AILGLLTALIFSLWWGPKLIE, MGGLLILAAIFISVLLWGDLG, YVWVMLFVLGSFGLIGFIDDY, YILQSLAALLIAFFLYATAAN, VMPQLGGVFIVLAYFTIVGSS, GLAIMPTVMVAAAFALIAYLS, SGELVIVCTAIVGAGLGFLWF, VFMGDVGSLSLGAALGAIAVL, ILLVIMGGVFVMETVSVILQV, and VIVRFWIISIFLVLLGLATLK.

Belongs to the glycosyltransferase 4 family. MraY subfamily. Requires Mg(2+) as cofactor.

The protein localises to the cell inner membrane. It carries out the reaction UDP-N-acetyl-alpha-D-muramoyl-L-alanyl-gamma-D-glutamyl-meso-2,6-diaminopimeloyl-D-alanyl-D-alanine + di-trans,octa-cis-undecaprenyl phosphate = di-trans,octa-cis-undecaprenyl diphospho-N-acetyl-alpha-D-muramoyl-L-alanyl-D-glutamyl-meso-2,6-diaminopimeloyl-D-alanyl-D-alanine + UMP. It participates in cell wall biogenesis; peptidoglycan biosynthesis. Functionally, catalyzes the initial step of the lipid cycle reactions in the biosynthesis of the cell wall peptidoglycan: transfers peptidoglycan precursor phospho-MurNAc-pentapeptide from UDP-MurNAc-pentapeptide onto the lipid carrier undecaprenyl phosphate, yielding undecaprenyl-pyrophosphoryl-MurNAc-pentapeptide, known as lipid I. The polypeptide is Phospho-N-acetylmuramoyl-pentapeptide-transferase (Shewanella putrefaciens (strain CN-32 / ATCC BAA-453)).